We begin with the raw amino-acid sequence, 352 residues long: MNVDSRVFRFFLVFLILVVVASPGCVDNQPEPGNTSAGEGEVLTVFHAGSLSVPFEELEAEFEAQHPGVDVQREAAGSAQSVRKITELGKKADVLASADYALIPSLMVPEYADWYAAFARNQMILAYTNESKYGDEINTDNWYEILRRPDVRYGFSNPNDDPAGYRSQMVTQLAESYYNDDMIYDDLMLANTGMTLTTEENGTALIHVPASEEISPNTSKIMLRSMEVELSSALETGEIDYLYIYRSVAEQHGFEYVALPPAIDLSSLEYADNYSKVQVEMVNGEVVTGSPIVYGVTIPNNAENSELATEFVALLLGETGQQIFIENGQPPIVPAIAEGKDSMPEELQALVV.

Positions 1-21 are cleaved as a signal peptide; it reads MNVDSRVFRFFLVFLILVVVA.

It belongs to the bacterial solute-binding protein 1 family. WtpA subfamily.

This is an uncharacterized protein from Methanosarcina acetivorans (strain ATCC 35395 / DSM 2834 / JCM 12185 / C2A).